The sequence spans 30 residues: Snaclec coagulation factor IX/factor X-binding protein subunit B (30 aa).

Residues C2 and C13 are joined by a disulfide bond. The 22-residue stretch at 9–30 (YEGHCYRVFTEPQNWADAEKFC) folds into the C-type lectin domain.

It belongs to the snaclec family. In terms of assembly, heterodimer of subunits A and B; disulfide-linked. Glycosylated. Expressed by the venom gland.

The protein localises to the secreted. Anticoagulant protein which binds to the gamma-carboxyglutamic acid-domain regions of factors IX (F9) and factor X (F10) in the presence of calcium with a 1 to 1 stoichiometry. The polypeptide is Snaclec coagulation factor IX/factor X-binding protein subunit B (Bothrops jararaca (Jararaca)).